The chain runs to 307 residues: Transcription factor MYB78 (307 aa).

HTH myb-type domains are found at residues 23-79 and 80-130; these read EMDV…RPDV and RRGN…QKHA. 2 DNA-binding regions (H-T-H motif) span residues 51 to 75 and 103 to 126; these read WNSL…LNYL and WSKI…RTRV.

It is found in the nucleus. The protein is Transcription factor MYB78 of Arabidopsis thaliana (Mouse-ear cress).